Here is a 126-residue protein sequence, read N- to C-terminus: Holo-[acyl-carrier-protein] synthase (126 aa).

Asp-9 and Glu-58 together coordinate Mg(2+).

The protein belongs to the P-Pant transferase superfamily. AcpS family. Mg(2+) is required as a cofactor.

It localises to the cytoplasm. It carries out the reaction apo-[ACP] + CoA = holo-[ACP] + adenosine 3',5'-bisphosphate + H(+). Functionally, transfers the 4'-phosphopantetheine moiety from coenzyme A to a Ser of acyl-carrier-protein. This Yersinia pseudotuberculosis serotype I (strain IP32953) protein is Holo-[acyl-carrier-protein] synthase.